A 110-amino-acid chain; its full sequence is UPF0060 membrane protein Bpet0062 (110 aa).

4 consecutive transmembrane segments (helical) span residues leucine 7 to tryptophan 27, serine 33 to leucine 53, alanine 63 to valine 83, and alanine 86 to glycine 106.

It belongs to the UPF0060 family.

It localises to the cell inner membrane. This Bordetella petrii (strain ATCC BAA-461 / DSM 12804 / CCUG 43448) protein is UPF0060 membrane protein Bpet0062.